Reading from the N-terminus, the 182-residue chain is UPF0397 protein BCAH187_A2708 (182 aa).

A run of 5 helical transmembrane segments spans residues 9–29 (VVAI…GFSI), 40–60 (AILT…IGLI), 71–91 (WGIW…MGFI), 114–134 (ITGL…DIIV), and 142–162 (IVIQ…VLGL).

This sequence belongs to the UPF0397 family.

The protein localises to the cell membrane. The chain is UPF0397 protein BCAH187_A2708 from Bacillus cereus (strain AH187).